Reading from the N-terminus, the 389-residue chain is Transaldolase (389 aa).

Lys136 acts as the Schiff-base intermediate with substrate in catalysis. EF-hand domains follow at residues 330–365 (ALNQ…FDAI) and 365–388 (IDLN…VSKL). Ca(2+) is bound by residues Asp343, Asp345, Asp347, Glu354, Asp366, Asn368, Asp370, Lys372, and Glu377.

This sequence belongs to the transaldolase family. Type 1 subfamily.

It is found in the cytoplasm. It carries out the reaction D-sedoheptulose 7-phosphate + D-glyceraldehyde 3-phosphate = D-erythrose 4-phosphate + beta-D-fructose 6-phosphate. It functions in the pathway carbohydrate degradation; pentose phosphate pathway; D-glyceraldehyde 3-phosphate and beta-D-fructose 6-phosphate from D-ribose 5-phosphate and D-xylulose 5-phosphate (non-oxidative stage): step 2/3. Transaldolase is important for the balance of metabolites in the pentose-phosphate pathway. The polypeptide is Transaldolase (Gloeobacter violaceus (strain ATCC 29082 / PCC 7421)).